We begin with the raw amino-acid sequence, 178 residues long: Methylmalonyl-CoA epimerase, mitochondrial (178 aa).

Residues 1 to 38 (MRRVVKAAALAAGATGLFSRVQTSVAIGRSFSTPQSQF) constitute a mitochondrion transit peptide. In terms of domain architecture, VOC spans 49–178 (RLNHVAVAVP…GGVLVELEQA (130 aa)). Histidine 52 contributes to the Co(2+) binding site. Lysine 116 bears the N6-succinyllysine mark. Histidine 124 provides a ligand contact to Co(2+). An N6-acetyllysine; alternate modification is found at lysine 152. Position 152 is an N6-succinyllysine; alternate (lysine 152). Glutamate 174 provides a ligand contact to Co(2+).

This sequence belongs to the methylmalonyl-CoA epimerase family.

It is found in the mitochondrion. The enzyme catalyses (R)-methylmalonyl-CoA = (S)-methylmalonyl-CoA. Methylmalonyl-CoA epimerase involved in propionyl-CoA metabolism. In Mus musculus (Mouse), this protein is Methylmalonyl-CoA epimerase, mitochondrial.